Consider the following 636-residue polypeptide: MSQPPWRCFSLLIFVLTIFSTKPSSASTSCSSSFHCPPFNSSPPYPFSASPGCGHPNFQIQCSSSRATITIKNLTFSILHYSSISSSLTLSPITNTNRNTNNCSSLRFSSSPNRFIDLTGSPFRVSDSSCSRLSLLRPCSPFTLPNCSRCPWDCKLLKNPGRILHGCESTHGSLSEQGCQGDLLGFLQDFFTRFGFEVEWDESQDPYFIKCRDCQIKNGVCGFNSTHPNQDFICFHKSRSELVTQRDNNKRVNHIAVLSLIFALTCLLLVFSVAVAIFRSRRASFLSSINEEDPAALFLRHHRSAALLPPVFTFEELESATNKFDPKRKIGDGGFGSVYLGQLSDGQLLAVKFLHHHHGATAAATEHCKAFSMKSFCNEILILSSINHPNLVKLHGYCSDPRGLLLVHDYVTNGTLADHLHGRGPKMTWRVRLDIALQTALAMEYLHFDIVPPVVHRDITSSNIFVEKDMKIKVGDFGLSRLLVFSETTVNSATSSDYVCTGPQGTPGYLDPDYHRSFRLTEKSDVYSYGVVLMELITGMKAVDQRREKRDMALADLVVSKIQMGLLDQVIDPLLALDGDDVAAVSDGFGVAAVAELAFRCVATDKDDRPDAKEIVQELRRIRSHTRVADDDVAKN.

The signal sequence occupies residues 1–26 (MSQPPWRCFSLLIFVLTIFSTKPSSA). The Extracellular segment spans residues 27–257 (STSCSSSFHC…NNKRVNHIAV (231 aa)). N-linked (GlcNAc...) asparagine glycosylation is found at N73, N102, N146, and N224. The helical transmembrane segment at 258-278 (LSLIFALTCLLLVFSVAVAIF) threads the bilayer. At 279 to 636 (RSRRASFLSS…RVADDDVAKN (358 aa)) the chain is on the cytoplasmic side. Residues 324–628 (FDPKRKIGDG…LRRIRSHTRV (305 aa)) form the Protein kinase domain. ATP is bound by residues 330-338 (IGDGGFGSV) and K352. D458 acts as the Proton acceptor in catalysis.

Belongs to the protein kinase superfamily. Ser/Thr protein kinase family.

It is found in the cell membrane. The enzyme catalyses L-seryl-[protein] + ATP = O-phospho-L-seryl-[protein] + ADP + H(+). It catalyses the reaction L-threonyl-[protein] + ATP = O-phospho-L-threonyl-[protein] + ADP + H(+). The sequence is that of LEAF RUST 10 DISEASE-RESISTANCE LOCUS RECEPTOR-LIKE PROTEIN KINASE-like 1.5 from Arabidopsis thaliana (Mouse-ear cress).